A 136-amino-acid polypeptide reads, in one-letter code: uncharacterized protein (136 aa).

A helical membrane pass occupies residues 7 to 27; it reads ANVLAILLVSLFLINGLVFLS.

The protein resides in the membrane. This is an uncharacterized protein from Mycoplasma pneumoniae (strain ATCC 29342 / M129 / Subtype 1) (Mycoplasmoides pneumoniae).